Consider the following 202-residue polypeptide: Small ribosomal subunit protein uS4 (202 aa).

Residues 94–157 form the S4 RNA-binding domain; sequence SRLDNLVYRM…KDLPIVAAGA (64 aa).

It belongs to the universal ribosomal protein uS4 family. As to quaternary structure, part of the 30S ribosomal subunit. Contacts protein S5. The interaction surface between S4 and S5 is involved in control of translational fidelity.

In terms of biological role, one of the primary rRNA binding proteins, it binds directly to 16S rRNA where it nucleates assembly of the body of the 30S subunit. With S5 and S12 plays an important role in translational accuracy. The protein is Small ribosomal subunit protein uS4 of Malacoplasma penetrans (strain HF-2) (Mycoplasma penetrans).